A 509-amino-acid chain; its full sequence is Zinc finger protein CKR1 (509 aa).

In terms of domain architecture, KRAB spans 1–61; that stretch reads MEPYVLLDPR…GSEEPQTHPP (61 aa). 2 stretches are compositionally biased toward basic and acidic residues: residues 41–50 and 98–112; these read EDAVGLKEDA and PKRD…RDRP. A disordered region spans residues 41–114; the sequence is EDAVGLKEDA…PSRVRDRPFG (74 aa). C2H2-type zinc fingers lie at residues 113–135, 141–163, 169–191, 197–219, 225–247, 279–303, 303–325, 331–353, 359–383, 387–409, and 415–437; these read FGCP…RRVH, YSCP…RRTH, HKCQ…SRGH, HRCG…RRVH, YECP…RRSH, QRCA…ERSH, FPCG…GKTH, YKCG…GHAA, and FTCG…RRVH. The segment at 428 to 479 is disordered; sequence SHLTKHRRSHGPKAPLLPVQGRGEAGEPLRASPLSSGAEQRDGRRAQRGGVE.

The protein belongs to the krueppel C2H2-type zinc-finger protein family.

It is found in the nucleus. This is Zinc finger protein CKR1 from Gallus gallus (Chicken).